We begin with the raw amino-acid sequence, 301 residues long: 2-phosphoglycerate kinase (301 aa).

In terms of domain architecture, ATP-cone spans 2–89 (IRVIEKGDKV…FWRRFRKMKV (88 aa)).

This sequence belongs to the 2-phosphoglycerate kinase family. The cofactor is a divalent metal cation.

The catalysed reaction is (2R)-2-phosphoglycerate + ATP = (2R)-2,3-bisphosphoglycerate + ADP + H(+). Its pathway is thermoadapter biosynthesis; cyclic 2,3-diphosphoglycerate biosynthesis; cyclic 2,3-diphosphoglycerate from 2-phospho-D-glycerate: step 1/2. Catalyzes the phosphorylation of 2-phosphoglycerate to 2,3-diphosphoglycerate. Involved in the biosynthesis of cyclic 2,3-bisphosphoglycerate, a thermoprotectant. The protein is 2-phosphoglycerate kinase of Pyrococcus horikoshii (strain ATCC 700860 / DSM 12428 / JCM 9974 / NBRC 100139 / OT-3).